A 385-amino-acid polypeptide reads, in one-letter code: 1-deoxy-D-xylulose 5-phosphate reductoisomerase (385 aa).

NADPH-binding residues include Thr-13, Gly-14, Ser-15, Ile-16, Asn-40, and Asn-122. Residue Lys-123 coordinates 1-deoxy-D-xylulose 5-phosphate. Glu-124 provides a ligand contact to NADPH. Asp-148 is a Mn(2+) binding site. Residues Ser-149, Glu-150, Ser-177, and His-200 each contribute to the 1-deoxy-D-xylulose 5-phosphate site. Position 150 (Glu-150) interacts with Mn(2+). Residue Gly-206 participates in NADPH binding. 4 residues coordinate 1-deoxy-D-xylulose 5-phosphate: Ser-213, Asn-218, Lys-219, and Glu-222. A Mn(2+)-binding site is contributed by Glu-222.

It belongs to the DXR family. Mg(2+) serves as cofactor. Requires Mn(2+) as cofactor.

It catalyses the reaction 2-C-methyl-D-erythritol 4-phosphate + NADP(+) = 1-deoxy-D-xylulose 5-phosphate + NADPH + H(+). Its pathway is isoprenoid biosynthesis; isopentenyl diphosphate biosynthesis via DXP pathway; isopentenyl diphosphate from 1-deoxy-D-xylulose 5-phosphate: step 1/6. In terms of biological role, catalyzes the NADPH-dependent rearrangement and reduction of 1-deoxy-D-xylulose-5-phosphate (DXP) to 2-C-methyl-D-erythritol 4-phosphate (MEP). The sequence is that of 1-deoxy-D-xylulose 5-phosphate reductoisomerase from Francisella tularensis subsp. novicida (strain U112).